Here is a 191-residue protein sequence, read N- to C-terminus: Protein LURP-one-related 6 (191 aa).

This sequence belongs to the LOR family.

In terms of biological role, might be related to the phospholipid scramblase and tubby-like superfamily of membrane tethered transcription factors. In Arabidopsis thaliana (Mouse-ear cress), this protein is Protein LURP-one-related 6.